Here is a 171-residue protein sequence, read N- to C-terminus: 3-hydroxyanthranilate 3,4-dioxygenase (171 aa).

Residue Arg-45 coordinates O2. 3 residues coordinate Fe cation: His-49, Glu-55, and His-93. Glu-55 is a substrate binding site. Arg-97 and Glu-107 together coordinate substrate. The a divalent metal cation site is built by Cys-122, Cys-125, Cys-159, and Cys-162.

The protein belongs to the 3-HAO family. It depends on Fe(2+) as a cofactor.

It is found in the cytoplasm. The catalysed reaction is 3-hydroxyanthranilate + O2 = (2Z,4Z)-2-amino-3-carboxymuconate 6-semialdehyde. It functions in the pathway cofactor biosynthesis; NAD(+) biosynthesis; quinolinate from L-kynurenine: step 3/3. Functionally, catalyzes the oxidative ring opening of 3-hydroxyanthranilate to 2-amino-3-carboxymuconate semialdehyde, which spontaneously cyclizes to quinolinate. The sequence is that of 3-hydroxyanthranilate 3,4-dioxygenase from Candida albicans (strain SC5314 / ATCC MYA-2876) (Yeast).